We begin with the raw amino-acid sequence, 183 residues long: Ubiquitin-conjugating enzyme E2-21 kDa (183 aa).

Residues 17–179 (TCMSRIVKEY…VKYFLAERER (163 aa)) enclose the UBC core domain. Residue Cys-115 is the Glycyl thioester intermediate of the active site.

It belongs to the ubiquitin-conjugating enzyme family.

The protein localises to the peroxisome. It carries out the reaction S-ubiquitinyl-[E1 ubiquitin-activating enzyme]-L-cysteine + [E2 ubiquitin-conjugating enzyme]-L-cysteine = [E1 ubiquitin-activating enzyme]-L-cysteine + S-ubiquitinyl-[E2 ubiquitin-conjugating enzyme]-L-cysteine.. Its pathway is protein modification; protein ubiquitination. In terms of biological role, catalyzes the covalent attachment of ubiquitin to other proteins. Essential for peroxisome biogenesis. Required for UBC4-independent ubiquitination of PEX5. The protein is Ubiquitin-conjugating enzyme E2-21 kDa (PEX4) of Saccharomyces cerevisiae (strain ATCC 204508 / S288c) (Baker's yeast).